Reading from the N-terminus, the 305-residue chain is Tetraacyldisaccharide 4'-kinase (305 aa).

39–46 (SVGGNGKT) lines the ATP pocket.

The protein belongs to the LpxK family.

It carries out the reaction a lipid A disaccharide + ATP = a lipid IVA + ADP + H(+). It functions in the pathway glycolipid biosynthesis; lipid IV(A) biosynthesis; lipid IV(A) from (3R)-3-hydroxytetradecanoyl-[acyl-carrier-protein] and UDP-N-acetyl-alpha-D-glucosamine: step 6/6. Its function is as follows. Transfers the gamma-phosphate of ATP to the 4'-position of a tetraacyldisaccharide 1-phosphate intermediate (termed DS-1-P) to form tetraacyldisaccharide 1,4'-bis-phosphate (lipid IVA). The sequence is that of Tetraacyldisaccharide 4'-kinase from Pseudoalteromonas atlantica (strain T6c / ATCC BAA-1087).